A 570-amino-acid chain; its full sequence is Phytoene desaturase (570 aa).

A helical transmembrane segment spans residues 547–567; the sequence is LFQGFLGALVAILLAYYYLVI.

Belongs to the carotenoid/retinoid oxidoreductase family. NAD(+) is required as a cofactor.

The protein localises to the membrane. The enzyme catalyses 15-cis-phytoene + A = all-trans-phytofluene + AH2. It carries out the reaction all-trans-phytofluene + A = all-trans-zeta-carotene + AH2. The catalysed reaction is all-trans-zeta-carotene + A = all-trans-neurosporene + AH2. It catalyses the reaction all-trans-neurosporene + A = all-trans-lycopene + AH2. The protein operates within carotenoid biosynthesis. Phytoene desaturase; part of the car gene cluster that mediates the biosynthesis of neurosporaxanthin, a carboxylic apocarotenoid acting as an essential protective pigments and leading to orange pigmentation. Converts phytoene into lycopene via the intermediates phytofluene, zeta-carotene and neurosporene; and further desaturates gamma-carotene into torulene. Neurosporaxanthin is synthesized from geranyl-geranyl pyrophosphate (GGPP) through several enzymatic activities. Phytoene synthase activity performed by the bifunctional enzyme carAR first produces phytoene from geranyl-geranyl pyrophosphate (GGPP). The phytoene dehydrogenase carB then introduces 4 desaturations to lead to lycopene which is substrate of the carotene cyclase activity of carAR that leads to the production of gamma-carotene. CarB then performs a 5th desaturation reaction to yield torulene. Torulene is the substrate of the dioxidase carT that breaks the molecule, removing five carbon atoms to yield beta-apo-4'-carotenal, whereas the aldehyde dehydrogenase carD mediates the last step by converting beta-apo-4'-carotenal into neurosporaxanthin. This is Phytoene desaturase from Fusarium fujikuroi (Bakanae and foot rot disease fungus).